Consider the following 597-residue polypeptide: Protein IQ-DOMAIN 29 (597 aa).

A disordered region spans residues Met1 to Leu31. IQ domains lie at Leu106–Arg134, Val135–Ser153, and Gly157–Asn183. The tract at residues Val159–Ser173 is calmodulin-binding. The short motif at Lys264 to Val271 is the Nuclear localization signal 1 element. Disordered regions lie at residues Phe268–Ile379 and Leu407–Arg597. Residues Ser289–Thr300 show a composition bias toward low complexity. Basic and acidic residues predominate over residues Glu319–Lys329. Positions His356 to Asn363 match the Nuclear localization signal 2 motif. The segment covering Lys414–Glu463 has biased composition (basic and acidic residues). Positions Gln467–Thr480 are enriched in polar residues. The segment covering Lys481–Asp500 has biased composition (basic and acidic residues). Polar residues predominate over residues Gly572–Lys584. Residues Asp585 to Arg597 are compositionally biased toward basic and acidic residues.

Belongs to the IQD family. Binds to multiple calmodulin (CaM) in the presence of Ca(2+) and CaM-like proteins.

Its subcellular location is the nucleus. It localises to the nucleus envelope. The protein resides in the cytoplasm. The protein localises to the cytoskeleton. It is found in the cell membrane. May be involved in cooperative interactions with calmodulins or calmodulin-like proteins. Recruits calmodulin proteins to microtubules, thus being a potential scaffold in cellular signaling and trafficking. May associate with nucleic acids and regulate gene expression at the transcriptional or post-transcriptional level. In Arabidopsis thaliana (Mouse-ear cress), this protein is Protein IQ-DOMAIN 29.